The primary structure comprises 102 residues: MANKKIRIRLKAYEHRTLDTAAAKIVESATRTGAQVAGPIPLPTERSLYTIIRATHKYKDSREQFEMRTHKRLIDIVNPTQKTVDALMKLDLPSGVNVEIKL.

This sequence belongs to the universal ribosomal protein uS10 family. In terms of assembly, part of the 30S ribosomal subunit.

In terms of biological role, involved in the binding of tRNA to the ribosomes. The sequence is that of Small ribosomal subunit protein uS10 from Streptococcus pneumoniae (strain CGSP14).